We begin with the raw amino-acid sequence, 269 residues long: RBPJ-interacting and tubulin-associated protein 1 (269 aa).

The short motif at 5 to 17 (VELAVSGMQTLGL) is the Nuclear export signal element. Disordered regions lie at residues 66 to 105 (VGKEASKALGAKGSCETTPSRGSTPTLTPRKKNKYRPISH) and 141 to 269 (LWTP…PPWK). Polar residues predominate over residues 80–92 (CETTPSRGSTPTL). The Nuclear localization signal signature appears at 92–108 (LTPRKKNKYRPISHTPS). The interaction with RBPJ/RBPSUH stretch occupies residues 128 to 156 (RMAKGDAAKLRALLWTPPPTPRGSHSPRP). Residues 156 to 269 (PREAPLRAIH…ATQKPKPPWK (114 aa)) form an interaction with tubulin region. Residues 200-253 (HSLTHLNVPSTGHPATSAPHTNGPQDLRPSTSGVTFRSPLVTSRARSVSISVPS) show a composition bias toward polar residues.

The protein belongs to the RITA family. In terms of assembly, interacts with RBPJ/RBPSUH.

It is found in the cytoplasm. The protein localises to the nucleus. Its subcellular location is the cytoskeleton. The protein resides in the microtubule organizing center. It localises to the centrosome. Its function is as follows. Tubulin-binding protein that acts as a negative regulator of Notch signaling pathway. Shuttles between the cytoplasm and the nucleus and mediates the nuclear export of RBPJ/RBPSUH, thereby preventing the interaction between RBPJ/RBPSUH and NICD product of Notch proteins (Notch intracellular domain), leading to down-regulate Notch-mediated transcription. May play a role in neurogenesis. The polypeptide is RBPJ-interacting and tubulin-associated protein 1 (RITA1) (Homo sapiens (Human)).